Consider the following 233-residue polypeptide: Cytidylate kinase (233 aa).

Residue 15-23 (GPSGAGKSS) coordinates ATP.

This sequence belongs to the cytidylate kinase family. Type 1 subfamily.

The protein resides in the cytoplasm. The catalysed reaction is CMP + ATP = CDP + ADP. It catalyses the reaction dCMP + ATP = dCDP + ADP. This chain is Cytidylate kinase, found in Citrifermentans bemidjiense (strain ATCC BAA-1014 / DSM 16622 / JCM 12645 / Bem) (Geobacter bemidjiensis).